We begin with the raw amino-acid sequence, 400 residues long: Protein transport protein HofC homolog (400 aa).

Helical transmembrane passes span 165 to 185 (YPIIILAMAIMVVVAMLHFVL), 209 to 229 (LADFSGEWSWLLVLFGFLLAI), and 370 to 390 (LLIITGGIIGTLVVAMYLPIF).

The protein belongs to the GSP F family.

Its subcellular location is the cell inner membrane. This chain is Protein transport protein HofC homolog (hofC), found in Escherichia coli (strain K12).